The sequence spans 332 residues: Phosphate acyltransferase (332 aa).

Belongs to the PlsX family. In terms of assembly, homodimer. Probably interacts with PlsY.

The protein resides in the cytoplasm. The catalysed reaction is a fatty acyl-[ACP] + phosphate = an acyl phosphate + holo-[ACP]. Its pathway is lipid metabolism; phospholipid metabolism. Its function is as follows. Catalyzes the reversible formation of acyl-phosphate (acyl-PO(4)) from acyl-[acyl-carrier-protein] (acyl-ACP). This enzyme utilizes acyl-ACP as fatty acyl donor, but not acyl-CoA. This is Phosphate acyltransferase from Streptococcus mutans serotype c (strain ATCC 700610 / UA159).